We begin with the raw amino-acid sequence, 427 residues long: MNADVFEAVCAMGDAARTAQSQLAQANTEAKNQLLNAIADALDQHADDIAAANTLDMNKAETDGMDAGKLDRLKFDQQRITAAAQGVRHVASLPDPIGEIVRGYHLENGLRLQQVRVPIGVLGMIYEARPNVTVDVASLCIKSGNAVLLRGGHAAEHTNAATLAVIADVLTKHGYDHNMIATVDQYGRDGATAMMEARGHIDVLIPRGGAGLIQAVVRNSKVPVIETGAGNVHIYVDRTGNPDKAIPILINAKTQRVGVCNATEKLLVHKDIAESFLPKAAAALAAAGVEMHADERAYGIIEHAGIANAQLVHATDEDWDTEYLALKIGIKVVDSLDEAIAHINRHSTGHTESIIAEDYSAIEEFTARIDSAVVMVNASTRFTDGGVFGFGAELGISTQKMHARGPMGLHEMTTTKWIGYGTGQVRE.

Belongs to the gamma-glutamyl phosphate reductase family.

The protein resides in the cytoplasm. It carries out the reaction L-glutamate 5-semialdehyde + phosphate + NADP(+) = L-glutamyl 5-phosphate + NADPH + H(+). It functions in the pathway amino-acid biosynthesis; L-proline biosynthesis; L-glutamate 5-semialdehyde from L-glutamate: step 2/2. Functionally, catalyzes the NADPH-dependent reduction of L-glutamate 5-phosphate into L-glutamate 5-semialdehyde and phosphate. The product spontaneously undergoes cyclization to form 1-pyrroline-5-carboxylate. This is Gamma-glutamyl phosphate reductase from Bifidobacterium adolescentis (strain ATCC 15703 / DSM 20083 / NCTC 11814 / E194a).